Here is a 441-residue protein sequence, read N- to C-terminus: N-succinylarginine dihydrolase (441 aa).

Substrate-binding positions include 19–28 (AGLSFGNEAS), asparagine 110, and 137–138 (HR). Glutamate 174 is a catalytic residue. Position 212 (arginine 212) interacts with substrate. Histidine 248 is a catalytic residue. Aspartate 250 and asparagine 359 together coordinate substrate. Cysteine 365 acts as the Nucleophile in catalysis.

Belongs to the succinylarginine dihydrolase family. In terms of assembly, homodimer.

The catalysed reaction is N(2)-succinyl-L-arginine + 2 H2O + 2 H(+) = N(2)-succinyl-L-ornithine + 2 NH4(+) + CO2. It functions in the pathway amino-acid degradation; L-arginine degradation via AST pathway; L-glutamate and succinate from L-arginine: step 2/5. Functionally, catalyzes the hydrolysis of N(2)-succinylarginine into N(2)-succinylornithine, ammonia and CO(2). The protein is N-succinylarginine dihydrolase of Erwinia tasmaniensis (strain DSM 17950 / CFBP 7177 / CIP 109463 / NCPPB 4357 / Et1/99).